We begin with the raw amino-acid sequence, 363 residues long: UDP-3-O-acylglucosamine N-acyltransferase (363 aa).

The Proton acceptor role is filled by His252.

The protein belongs to the transferase hexapeptide repeat family. LpxD subfamily. As to quaternary structure, homotrimer.

The enzyme catalyses a UDP-3-O-[(3R)-3-hydroxyacyl]-alpha-D-glucosamine + a (3R)-hydroxyacyl-[ACP] = a UDP-2-N,3-O-bis[(3R)-3-hydroxyacyl]-alpha-D-glucosamine + holo-[ACP] + H(+). The protein operates within bacterial outer membrane biogenesis; LPS lipid A biosynthesis. In terms of biological role, catalyzes the N-acylation of UDP-3-O-acylglucosamine using 3-hydroxyacyl-ACP as the acyl donor. Is involved in the biosynthesis of lipid A, a phosphorylated glycolipid that anchors the lipopolysaccharide to the outer membrane of the cell. The sequence is that of UDP-3-O-acylglucosamine N-acyltransferase from Cupriavidus taiwanensis (strain DSM 17343 / BCRC 17206 / CCUG 44338 / CIP 107171 / LMG 19424 / R1) (Ralstonia taiwanensis (strain LMG 19424)).